The primary structure comprises 585 residues: Arginine--tRNA ligase (585 aa).

Positions 126-136 (PNIAKEMHVGH) match the 'HIGH' region motif.

It belongs to the class-I aminoacyl-tRNA synthetase family. In terms of assembly, monomer.

The protein resides in the cytoplasm. The enzyme catalyses tRNA(Arg) + L-arginine + ATP = L-arginyl-tRNA(Arg) + AMP + diphosphate. The polypeptide is Arginine--tRNA ligase (Crocosphaera subtropica (strain ATCC 51142 / BH68) (Cyanothece sp. (strain ATCC 51142))).